The primary structure comprises 138 residues: Small ribosomal subunit protein uS11c (138 aa).

Positions Met-1–Arg-23 are disordered. The segment covering Gly-9 to Arg-23 has biased composition (basic residues).

Belongs to the universal ribosomal protein uS11 family. Part of the 30S ribosomal subunit.

The protein resides in the plastid. Its subcellular location is the chloroplast. The protein is Small ribosomal subunit protein uS11c of Crucihimalaya wallichii (Rock-cress).